Here is a 288-residue protein sequence, read N- to C-terminus: CBY1-interacting BAR domain-containing protein 1 (288 aa).

Residues 1-47 (MLRRSLENRDAQTRQLQDAVTNVEKHFGELCQIFAAYVRKTARLRDK) constitute a mitochondrion transit peptide. Positions 10-220 (DAQTRQLQDA…KIDEEEDLEV (211 aa)) are BAR-like. Residues 107-176 (KMKRDDLKAT…ETIDNFEKQK (70 aa)) adopt a coiled-coil conformation. Positions 266-288 (RKDHQTEDDDEEDEDLDVTEEEN) are disordered. Acidic residues predominate over residues 271–288 (TEDDDEEDEDLDVTEEEN).

This sequence belongs to the CIBAR family. As to quaternary structure, homodimer (via BAR-like domain). Heterodimer with FAM92B (via BAR-like domains). Interacts (via BAR-like domain) with CBY1; this interaction is required for targeting FAM92A to centriole and cilium basal body. Interacts (via BAR-like domain) with CBY3; both proteins form a ninefold symmetric structure at the flagellar base; are recruited to the annulus in a mutually dependent manner and regulate annulus positionning.

It is found in the cytoplasm. The protein localises to the cytoskeleton. It localises to the microtubule organizing center. Its subcellular location is the centrosome. The protein resides in the centriole. It is found in the cilium basal body. The protein localises to the cell projection. It localises to the cilium. Its subcellular location is the nucleus. The protein resides in the mitochondrion inner membrane. It is found in the flagellum. Its function is as follows. Plays a critical role in regulating mitochondrial ultrastructure and function by maintaining the integrity of mitochondrial morphology, particularly the organization of cristae. Preferentially binds to negatively charged phospholipids like cardiolipin and phosphatidylinositol 4,5-bisphosphate enhancing its interaction with mitochondrial membranes. Induces membrane curvature and tubulation, which are critical for maintaining mitochondrial ultrastructure and the organization of cristae. Plays a crucial role in ciliogenesis. May play a role in limb development through its role in ciliogenesis. Plays a key role in the correct positioning of the annulus, a septin-based ring structure in the sperm flagellum, serving both as a physical barrier and a membrane diffusion barrier that separates the midpiece (MP) from the principal piece (PP). This positioning is essential for proper sperm motility and function. Interacts with CBY3 to form a complex which localizes to the curved membrane region of the flagellar pocket. By doing so, may provide stability and rigidity to the periannular membrane to prevent membrane deformation. This function is crucial for halting annulus migration at the proximal end of the fibrous sheath-containing PP. The polypeptide is CBY1-interacting BAR domain-containing protein 1 (Bos taurus (Bovine)).